Consider the following 338-residue polypeptide: Holliday junction branch migration complex subunit RuvB (338 aa).

The segment at 1-181 is large ATPase domain (RuvB-L); it reads MEERILTQNF…FGVINRLDYY (181 aa). Residues Leu20, Arg21, Gly62, Lys65, Thr66, Thr67, 128-130, Arg171, Tyr181, and Arg218 each bind ATP; that span reads EDF. Residue Thr66 coordinates Mg(2+). Residues 182–252 are small ATPAse domain (RuvB-S); sequence SVEELKEIIK…TANIALNMLG (71 aa). The segment at 255 to 338 is head domain (RuvB-H); sequence EMGLEEIDRK…YVEQRRIEDV (84 aa). DNA-binding residues include Arg310 and Arg315.

Belongs to the RuvB family. As to quaternary structure, homohexamer. Forms an RuvA(8)-RuvB(12)-Holliday junction (HJ) complex. HJ DNA is sandwiched between 2 RuvA tetramers; dsDNA enters through RuvA and exits via RuvB. An RuvB hexamer assembles on each DNA strand where it exits the tetramer. Each RuvB hexamer is contacted by two RuvA subunits (via domain III) on 2 adjacent RuvB subunits; this complex drives branch migration. In the full resolvosome a probable DNA-RuvA(4)-RuvB(12)-RuvC(2) complex forms which resolves the HJ.

It localises to the cytoplasm. The catalysed reaction is ATP + H2O = ADP + phosphate + H(+). In terms of biological role, the RuvA-RuvB-RuvC complex processes Holliday junction (HJ) DNA during genetic recombination and DNA repair, while the RuvA-RuvB complex plays an important role in the rescue of blocked DNA replication forks via replication fork reversal (RFR). RuvA specifically binds to HJ cruciform DNA, conferring on it an open structure. The RuvB hexamer acts as an ATP-dependent pump, pulling dsDNA into and through the RuvAB complex. RuvB forms 2 homohexamers on either side of HJ DNA bound by 1 or 2 RuvA tetramers; 4 subunits per hexamer contact DNA at a time. Coordinated motions by a converter formed by DNA-disengaged RuvB subunits stimulates ATP hydrolysis and nucleotide exchange. Immobilization of the converter enables RuvB to convert the ATP-contained energy into a lever motion, pulling 2 nucleotides of DNA out of the RuvA tetramer per ATP hydrolyzed, thus driving DNA branch migration. The RuvB motors rotate together with the DNA substrate, which together with the progressing nucleotide cycle form the mechanistic basis for DNA recombination by continuous HJ branch migration. Branch migration allows RuvC to scan DNA until it finds its consensus sequence, where it cleaves and resolves cruciform DNA. This is Holliday junction branch migration complex subunit RuvB from Caldanaerobacter subterraneus subsp. tengcongensis (strain DSM 15242 / JCM 11007 / NBRC 100824 / MB4) (Thermoanaerobacter tengcongensis).